A 506-amino-acid chain; its full sequence is Pleckstrin homology domain-containing family D member 1 (506 aa).

Residues 28 to 136 form the PH domain; the sequence is KVQLYGVLWK…WLEMLQESGK (109 aa). Positions 146 to 391 form a coiled coil; it reads EAMIKSLEAQ…KVRNKEKEER (246 aa). R503 carries the post-translational modification Omega-N-methylarginine.

The protein belongs to the PLEKHD1 family.

The protein is Pleckstrin homology domain-containing family D member 1 (PLEKHD1) of Homo sapiens (Human).